We begin with the raw amino-acid sequence, 475 residues long: Ribulose bisphosphate carboxylase large chain (475 aa).

The propeptide occupies 1-2 (MS). P3 is modified (N-acetylproline). The substrate site is built by T65, N123, and T173. Catalysis depends on K175, which acts as the Proton acceptor. K177 contributes to the substrate binding site. Residues K201, D203, and E204 each coordinate Mg(2+). K201 bears the N6-carboxylysine mark. Residues E204, H294, R295, H327, K334, S379, G381, G403, and G404 each coordinate substrate. H294 functions as the Proton acceptor in the catalytic mechanism.

The protein belongs to the RuBisCO large chain family. Type I subfamily. Heterohexadecamer of 8 large chains and 8 small chains. It depends on Mg(2+) as a cofactor. The disulfide bond which can form between Cys-247 in the large chain dimeric partners within the hexadecamer appears to be associated with oxidative stress and protein turnover. The disulfide bonds reported in 1RBO may be the result of oxidation during crystallization.

Its subcellular location is the plastid. It localises to the chloroplast. The catalysed reaction is 2 (2R)-3-phosphoglycerate + 2 H(+) = D-ribulose 1,5-bisphosphate + CO2 + H2O. The enzyme catalyses D-ribulose 1,5-bisphosphate + O2 = 2-phosphoglycolate + (2R)-3-phosphoglycerate + 2 H(+). With respect to regulation, abscisic acid (ABA) causes weak inhibition of RuBisCO catalytic activity, but more potent inhibition of RuBisCO activation. Functionally, ruBisCO catalyzes two reactions: the carboxylation of D-ribulose 1,5-bisphosphate, the primary event in carbon dioxide fixation, as well as the oxidative fragmentation of the pentose substrate in the photorespiration process. Both reactions occur simultaneously and in competition at the same active site. Binds to abscisic acid (ABA) which has weakly inhibits carboxylation and more strongly inhibits enzyme activation. In Spinacia oleracea (Spinach), this protein is Ribulose bisphosphate carboxylase large chain.